The following is a 543-amino-acid chain: Carboxypeptidase Y homolog A (543 aa).

The N-terminal stretch at 1 to 17 (MKFLTTGLLATAALAAA) is a signal peptide. Residues 18 to 124 (QEQQVLQAED…KLHNYDLRVK (107 aa)) constitute a propeptide that is removed on maturation. 5 disulfides stabilise this stretch: Cys-179–Cys-419, Cys-313–Cys-327, Cys-337–Cys-360, Cys-344–Cys-353, and Cys-382–Cys-389. Residue Asn-210 is glycosylated (N-linked (GlcNAc...) asparagine). Ser-266 is a catalytic residue. Asp-458 is a catalytic residue. Asn-509 is a glycosylation site (N-linked (GlcNAc...) asparagine). His-520 is a catalytic residue.

This sequence belongs to the peptidase S10 family.

It localises to the vacuole. It carries out the reaction Release of a C-terminal amino acid with broad specificity.. Its function is as follows. Vacuolar carboxypeptidase involved in degradation of small peptides. Digests preferentially peptides containing an aliphatic or hydrophobic residue in P1' position, as well as methionine, leucine or phenylalanine in P1 position of ester substrate. This Trichophyton equinum (Horse ringworm fungus) protein is Carboxypeptidase Y homolog A (CPYA).